A 217-amino-acid chain; its full sequence is Somatotropin (217 aa).

Positions 1-26 are cleaved as a signal peptide; the sequence is MMAAGPRTSLLLAFALLCLPWTQVVG. His-46 is a Zn(2+) binding site. Cys-79 and Cys-190 form a disulfide bridge. Residue Ser-132 is modified to Phosphoserine. A Zn(2+)-binding site is contributed by Glu-199. Residues Cys-207 and Cys-215 are joined by a disulfide bond.

It belongs to the somatotropin/prolactin family.

Its subcellular location is the secreted. Its function is as follows. Plays an important role in growth control. Its major role in stimulating body growth is to stimulate the liver and other tissues to secrete IGF1. It stimulates both the differentiation and proliferation of myoblasts. It also stimulates amino acid uptake and protein synthesis in muscle and other tissues. The chain is Somatotropin (GH1) from Bubalus bubalis (Domestic water buffalo).